The sequence spans 122 residues: Urocortin (122 aa).

The first 25 residues, 1–25 (MIQRGRATLLVALLLLAQLRPESSQ), serve as a signal peptide directing secretion. The propeptide occupies 26–80 (WSPAAAAATGVQDPNLRWSPGVRNQGGGVRALLLLLAERFPRRAGSEPAGERQRR). At V120 the chain carries Valine amide.

This sequence belongs to the sauvagine/corticotropin-releasing factor/urotensin I family. In terms of assembly, interacts with CRHR1 and CRHR2 (via their N-terminal extracellular domain). As to expression, in the organ of Corti, detected in the inner hair cell region (at protein level). Expressed in skin (at protein level).

The protein resides in the secreted. In terms of biological role, acts in vitro to stimulate the secretion of adrenocorticotropic hormone (ACTH). Binds with high affinity to CRF receptor types 1, 2-alpha, and 2-beta. Plays a role in the establishment of normal hearing thresholds. Reduces food intake and regulates ghrelin levels in gastric body and plasma. The protein is Urocortin (Ucn) of Mus musculus (Mouse).